A 201-amino-acid polypeptide reads, in one-letter code: Holliday junction resolvase RecU (201 aa).

Mg(2+) contacts are provided by T85, D87, E100, and Q119.

Belongs to the RecU family. Mg(2+) serves as cofactor.

It is found in the cytoplasm. It carries out the reaction Endonucleolytic cleavage at a junction such as a reciprocal single-stranded crossover between two homologous DNA duplexes (Holliday junction).. Its function is as follows. Endonuclease that resolves Holliday junction intermediates in genetic recombination. Cleaves mobile four-strand junctions by introducing symmetrical nicks in paired strands. Promotes annealing of linear ssDNA with homologous dsDNA. Required for DNA repair, homologous recombination and chromosome segregation. This chain is Holliday junction resolvase RecU, found in Geobacillus thermodenitrificans (strain NG80-2).